The primary structure comprises 84 residues: Small ribosomal subunit protein uS17 (84 aa).

This sequence belongs to the universal ribosomal protein uS17 family. Part of the 30S ribosomal subunit.

Functionally, one of the primary rRNA binding proteins, it binds specifically to the 5'-end of 16S ribosomal RNA. This is Small ribosomal subunit protein uS17 from Blochmanniella pennsylvanica (strain BPEN).